A 779-amino-acid chain; its full sequence is Catalase-peroxidase (779 aa).

The tryptophyl-tyrosyl-methioninium (Trp-Tyr) (with M-296) cross-link spans 148-270; the sequence is WHSAGTYRIT…LGAVQMGLIY (123 aa). The Proton acceptor role is filled by histidine 149. Positions 270-296 form a cross-link, tryptophyl-tyrosyl-methioninium (Tyr-Met) (with W-148); the sequence is YVNPEGPNGKPDPIAAAKDIRETFFRM. Position 311 (histidine 311) interacts with heme b.

Belongs to the peroxidase family. Peroxidase/catalase subfamily. As to quaternary structure, homodimer or homotetramer. Requires heme b as cofactor. Post-translationally, formation of the three residue Trp-Tyr-Met cross-link is important for the catalase, but not the peroxidase activity of the enzyme.

The catalysed reaction is H2O2 + AH2 = A + 2 H2O. The enzyme catalyses 2 H2O2 = O2 + 2 H2O. In terms of biological role, bifunctional enzyme with both catalase and broad-spectrum peroxidase activity. This Bradyrhizobium diazoefficiens (strain JCM 10833 / BCRC 13528 / IAM 13628 / NBRC 14792 / USDA 110) protein is Catalase-peroxidase.